The primary structure comprises 158 residues: Mediator of RNA polymerase II transcription subunit 31 (158 aa).

Residues 130–158 are disordered; sequence EQSAAEAGEQNTEQNKGDRGNVENQHGKT.

The protein belongs to the Mediator complex subunit 31 family. As to quaternary structure, component of the Mediator complex.

It localises to the nucleus. Its function is as follows. Component of the Mediator complex, a coactivator involved in the regulated transcription of nearly all RNA polymerase II-dependent genes. Mediator functions as a bridge to convey information from gene-specific regulatory proteins to the basal RNA polymerase II transcription machinery. Mediator is recruited to promoters by direct interactions with regulatory proteins and serves as a scaffold for the assembly of a functional preinitiation complex with RNA polymerase II and the general transcription factors. In Emericella nidulans (strain FGSC A4 / ATCC 38163 / CBS 112.46 / NRRL 194 / M139) (Aspergillus nidulans), this protein is Mediator of RNA polymerase II transcription subunit 31 (soh1).